Here is a 335-residue protein sequence, read N- to C-terminus: Glycerol-3-phosphate dehydrogenase [NAD(P)+] (335 aa).

Residues tryptophan 14, arginine 33, and lysine 111 each contribute to the NADPH site. Sn-glycerol 3-phosphate-binding residues include lysine 111, glycine 140, and serine 142. Alanine 144 contacts NADPH. Residues lysine 195, aspartate 248, serine 258, arginine 259, and asparagine 260 each contribute to the sn-glycerol 3-phosphate site. Residue lysine 195 is the Proton acceptor of the active site. Residue arginine 259 coordinates NADPH. Residues valine 283 and glutamate 285 each contribute to the NADPH site.

The protein belongs to the NAD-dependent glycerol-3-phosphate dehydrogenase family.

Its subcellular location is the cytoplasm. The catalysed reaction is sn-glycerol 3-phosphate + NAD(+) = dihydroxyacetone phosphate + NADH + H(+). It catalyses the reaction sn-glycerol 3-phosphate + NADP(+) = dihydroxyacetone phosphate + NADPH + H(+). Its pathway is membrane lipid metabolism; glycerophospholipid metabolism. Its function is as follows. Catalyzes the reduction of the glycolytic intermediate dihydroxyacetone phosphate (DHAP) to sn-glycerol 3-phosphate (G3P), the key precursor for phospholipid synthesis. This Burkholderia mallei (strain NCTC 10247) protein is Glycerol-3-phosphate dehydrogenase [NAD(P)+].